The following is a 365-amino-acid chain: Deoxyribonuclease-2-alpha (365 aa).

An N-terminal signal peptide occupies residues 1-19 (MATLSSLLLTALLWVPVGT). C22 and C162 form a disulfide bridge. Residues N215, N269, and N293 are each glycosylated (N-linked (GlcNAc...) asparagine). Disulfide bonds link C270/C348 and C311/C330. The active site involves H298.

The protein belongs to the DNase II family.

Its subcellular location is the lysosome. It carries out the reaction Endonucleolytic cleavage to nucleoside 3'-phosphates and 3'-phosphooligonucleotide end-products.. Its function is as follows. Hydrolyzes DNA under acidic conditions with a preference for double-stranded DNA. Plays a major role in the clearance of nucleic acids generated through apoptosis, hence preventing autoinflammation. Necessary for proper fetal development and for definitive erythropoiesis in fetal liver and bone marrow, where it degrades nuclear DNA expelled from erythroid precursor cells. This Bos taurus (Bovine) protein is Deoxyribonuclease-2-alpha (DNASE2).